We begin with the raw amino-acid sequence, 198 residues long: Prostamide/prostaglandin F synthase (198 aa).

Y108 carries the phosphotyrosine modification.

This sequence belongs to the peroxiredoxin-like PRXL2 family. Prostamide/prostaglandin F synthase subfamily.

It localises to the cytoplasm. It is found in the cytosol. It catalyses the reaction prostaglandin H2 + [thioredoxin]-dithiol = prostaglandin F2alpha + [thioredoxin]-disulfide. The catalysed reaction is prostamide F2alpha + [thioredoxin]-disulfide = prostamide H2 + [thioredoxin]-dithiol. Functionally, catalyzes the reduction of prostaglandin-ethanolamide H(2) (prostamide H(2)) to prostamide F(2alpha) with NADPH as proton donor. Also able to reduce prostaglandin H(2) to prostaglandin F(2alpha). This is Prostamide/prostaglandin F synthase from Homo sapiens (Human).